Consider the following 61-residue polypeptide: Fasciculin-2 (61 aa).

Disulfide bonds link cysteine 3–cysteine 22, cysteine 17–cysteine 39, cysteine 41–cysteine 52, and cysteine 53–cysteine 59.

It belongs to the three-finger toxin family. Short-chain subfamily. Acn-esterase inhibitor sub-subfamily. In terms of tissue distribution, expressed by the venom gland.

It localises to the secreted. Functionally, interferes with neuromuscular transmission by inhibiting the enzyme acetylcholinesterase (AChE) present at the neuromuscular junction. It selectively binds and inhibits with a 1:1 stoichiometry the mammalian and electric fish AChE at picomolar concentrations. It is highly specific for the peripheral site of AChE and blocks the entry of acetylcholine into the active site of the enzyme (through the Met-33 residue), thereby preventing its breakdown. It has been called fasciculin since after injection into mice it causes severe, generalized and long-lasting (5-7 hours) fasciculations. This Dendroaspis angusticeps (Eastern green mamba) protein is Fasciculin-2.